Reading from the N-terminus, the 634-residue chain is Lamin tail domain-containing protein 2 (634 aa).

The interval 1 to 44 is disordered; the sequence is MRWLRPAGRRREQESVSGHLGPPAGAPAAPETPTCLPDTTPHPA. A coiled-coil region spans residues 106 to 169; it reads SHSQEKLLQN…QKSCLLQLAR (64 aa). Positions 228 to 237 are enriched in polar residues; it reads FTNMEPSSKQ. 2 disordered regions span residues 228-349 and 464-575; these read FTNM…TDPD and HRIP…PAEA. Residues 276 to 287 show a composition bias toward low complexity; that stretch reads SSSGGADSDSSS. Polar residues predominate over residues 310 to 321; sequence SEQALVQAGSYS. Residues 322 to 337 are compositionally biased toward basic and acidic residues; the sequence is RDSEDLQKTHSPRHGE. Positions 350–468 constitute an LTD domain; it reads HWSPELLQSP…EVLSEHRIPR (119 aa). Over residues 502–513 the composition is skewed to basic residues; sequence PPRPPRPLRKGR. The span at 540–550 shows a compositional bias: basic and acidic residues; the sequence is HAREGPARPEN.

The chain is Lamin tail domain-containing protein 2 (LMNTD2) from Homo sapiens (Human).